The sequence spans 480 residues: Thyroid receptor-interacting protein 6 (480 aa).

A compositionally biased stretch (pro residues) spans 1–12 (MSGPTWLPPKQP). A disordered region spans residues 1–43 (MSGPTWLPPKQPEPSRLPQGRSLPRGALGPPTAHGATLQPHPR). Asymmetric dimethylarginine; alternate is present on R25. At R25 the chain carries Omega-N-methylarginine; alternate. Residue Y55 is modified to Phosphotyrosine; by SRC. Positions 57–84 (PPGVPEDRGPTWVGSHGTPQRLQGLPPD) are disordered. The residue at position 92 (S92) is a Phosphoserine. The interval 107–134 (LDGGRSHAPRRPDRQAFEAPPPHAYRGG) is disordered. Residues 108-122 (DGGRSHAPRRPDRQA) are compositionally biased toward basic and acidic residues. Omega-N-methylarginine occurs at positions 111, 183, and 190. Residue S193 is modified to Phosphoserine. Omega-N-methylarginine is present on residues R209 and R242. Positions 218–257 (RSHREPGPGVPEGPSGVHIPAGGGRGGGHEPQGPLGQPPE) are disordered. Positions 238–247 (AGGGRGGGHE) are enriched in gly residues. LIM zinc-binding domains follow at residues 281-339 (GRCG…YVAT), 341-401 (EKCS…KFAP), and 404-471 (SVCG…RIQE). The tract at residues 473 to 480 (SATVTTDC) is interaction with MAGI1 and PTPN13.

It belongs to the zyxin/ajuba family. Specifically interacts with the ligand binding domain of the thyroid receptor (TR) in the presence of thyroid hormone. Interacts (via the third LIM domain and C-terminus) with PTPN13 (via the second PDZ domain). Interacts (via the second LIM domain or via the third LIM domain plus C-terminus) with PDLIM4 (via PDZ domain). Found in a complex with PTPN13 and PDLIM4. Interacts with SVIL isoform 2. Interacts with LPAR2 but not other LPA receptors. Interacts with PRKAA2. Interacts with MAGI1. Interacts with SCRIB. In case of infection, interacts with S.typhimurium protein sseI. Phosphorylation at Tyr-55 by SRC is required for enhancement of lysophosphatidic acid-induced cell migration. Tyr-55 is dephosphorylated by PTPN13. Highly expressed in kidney, stomach, lung, heart and testis. Low expression levels in brain, colon, thymus, pancreas and skin. Not expressed in skeletal muscle.

It is found in the cytoplasm. It localises to the cytoskeleton. The protein resides in the cell junction. Its subcellular location is the focal adhesion. The protein localises to the nucleus. In terms of biological role, relays signals from the cell surface to the nucleus to weaken adherens junction and promote actin cytoskeleton reorganization and cell invasiveness. Involved in lysophosphatidic acid-induced cell adhesion and migration. Acts as a transcriptional coactivator for NF-kappa-B and JUN, and mediates the transrepression of these transcription factors induced by glucocorticoid receptor. The chain is Thyroid receptor-interacting protein 6 (Trip6) from Mus musculus (Mouse).